We begin with the raw amino-acid sequence, 234 residues long: Sugar fermentation stimulation protein homolog (234 aa).

Belongs to the SfsA family.

The sequence is that of Sugar fermentation stimulation protein homolog from Bartonella quintana (strain Toulouse) (Rochalimaea quintana).